Consider the following 156-residue polypeptide: Ribosomal RNA large subunit methyltransferase H (156 aa).

S-adenosyl-L-methionine is bound by residues Leu73, Gly104, and 123–128; that span reads ISSMTL.

This sequence belongs to the RNA methyltransferase RlmH family. In terms of assembly, homodimer.

It localises to the cytoplasm. The catalysed reaction is pseudouridine(1915) in 23S rRNA + S-adenosyl-L-methionine = N(3)-methylpseudouridine(1915) in 23S rRNA + S-adenosyl-L-homocysteine + H(+). Its function is as follows. Specifically methylates the pseudouridine at position 1915 (m3Psi1915) in 23S rRNA. This Burkholderia lata (strain ATCC 17760 / DSM 23089 / LMG 22485 / NCIMB 9086 / R18194 / 383) protein is Ribosomal RNA large subunit methyltransferase H.